Reading from the N-terminus, the 371-residue chain is uncharacterized protein (371 aa).

His76 contributes to the Zn(2+) binding site. The active site involves Asp78. Asp106 is a Zn(2+) binding site. The active-site Proton acceptor is Glu139. 3 residues coordinate Zn(2+): Glu140, Asp163, and His344.

This sequence belongs to the peptidase M20A family. It depends on Zn(2+) as a cofactor.

In terms of biological role, could be a peptidase. This is an uncharacterized protein from Bacillus subtilis (strain 168).